The sequence spans 22 residues: Mu-conotoxin GIIIC (22 aa).

3 disulfide bridges follow: Cys-3/Cys-15, Cys-4/Cys-20, and Cys-10/Cys-21. Residues Pro-6, Pro-7, and Pro-17 each carry the 4-hydroxyproline modification. Residue Ala-22 is modified to Alanine amide.

The protein belongs to the conotoxin M superfamily. As to expression, expressed by the venom duct.

Its subcellular location is the secreted. Its function is as follows. Mu-conotoxins block voltage-gated sodium channels (Nav). This toxin shows potent activity on Nav1.4/SCN4A (IC(50)=286 nM), and weak activity on mNav1.6/SCN8A. In Conus geographus (Geography cone), this protein is Mu-conotoxin GIIIC.